We begin with the raw amino-acid sequence, 297 residues long: Small ribosomal subunit biogenesis GTPase RsgA (297 aa).

Positions 65–223 constitute a CP-type G domain; the sequence is RNELVRPPVA…VADTPGFSAI (159 aa). GTP contacts are provided by residues 114-117 and 166-174; these read TKVD and GQSGAGKST. Zn(2+) contacts are provided by C247, C252, H254, and C260.

It belongs to the TRAFAC class YlqF/YawG GTPase family. RsgA subfamily. As to quaternary structure, monomer. Associates with 30S ribosomal subunit, binds 16S rRNA. Zn(2+) is required as a cofactor.

The protein resides in the cytoplasm. Its function is as follows. One of several proteins that assist in the late maturation steps of the functional core of the 30S ribosomal subunit. Helps release RbfA from mature subunits. May play a role in the assembly of ribosomal proteins into the subunit. Circularly permuted GTPase that catalyzes slow GTP hydrolysis, GTPase activity is stimulated by the 30S ribosomal subunit. The sequence is that of Small ribosomal subunit biogenesis GTPase RsgA from Enterococcus faecalis (strain ATCC 700802 / V583).